A 785-amino-acid chain; its full sequence is Potassium transporter 5 (785 aa).

Residues 1–60 (MDGEEHQIDGDEVNNHENKLNEKKKSWGKLYRPDSFIIEAGQTPTNTGRRSLMSWRTTMS) are Cytoplasmic-facing. Residue Ser-35 is modified to Phosphoserine. The chain crosses the membrane as a helical span at residues 61–81 (LAFQSLGVVYGDIGTSPLYVY). The Extracellular segment spans residues 82 to 97 (ASTFTDGINDKDDVVG). A helical transmembrane segment spans residues 98 to 118 (VLSLIIYTITLVALLKYVFIV). The Cytoplasmic segment spans residues 119 to 184 (LQANDNGEGG…EKLENSKFAK (66 aa)). The helical transmembrane segment at 185-205 (IILFLVTIMGTSMVIGDGILT) threads the bilayer. Topologically, residues 206-218 (PSISVLSAVSGIK) are extracellular. The chain crosses the membrane as a helical span at residues 219–239 (SLGQNTVVGVSVAILIVLFAF). Over 240–247 (QRFGTDKV) the chain is Cytoplasmic. A helical transmembrane segment spans residues 248–268 (GFSFAPIILVWFTFLIGIGLF). At 269–297 (NLFKHDITVLKALNPLYIIYYFRRTGRQG) the chain is on the extracellular side. A helical membrane pass occupies residues 298–318 (WISLGGVFLCITGTEAMFADL). The Cytoplasmic portion of the chain corresponds to 319–327 (GHFSVRAVQ). The helical transmembrane segment at 328-348 (ISFSCVAYPALVTIYCGQAAY) threads the bilayer. At 349-367 (LTKHTYNVSNTFYDSIPDP) the chain is on the extracellular side. N-linked (GlcNAc...) asparagine glycosylation is present at Asn-355. A helical membrane pass occupies residues 368 to 388 (LYWPTFVVAVAASIIASQAMI). At 389–419 (SGAFSVISQSLRMGCFPRVKVVHTSAKYEGQ) the chain is on the cytoplasmic side. Residues 420–440 (VYIPEINYLLMLACIAVTLAF) form a helical membrane-spanning segment. Residues 441 to 451 (RTTEKIGHAYG) lie on the Extracellular side of the membrane. A helical transmembrane segment spans residues 452–472 (IAVVTVMVITTLMVTLIMLVI). At 473–476 (WKTN) the chain is on the cytoplasmic side. Residues 477–497 (IVWIAIFLVVFGSIEMLYLSS) traverse the membrane as a helical segment. Residues 498–501 (VMYK) are Extracellular-facing. Residues 502 to 522 (FTSGGYLPLTITVVLMAMMAI) traverse the membrane as a helical segment. Over 523–785 (WQYVHVLKYR…LLKVGMTYEL (263 aa)) the chain is Cytoplasmic. Positions 660–699 (GGEVDETDKEEEPNAETTVVPSSNYVPSSGRIGSAHSSSS) are disordered. The span at 662 to 673 (EVDETDKEEEPN) shows a compositional bias: acidic residues. A compositionally biased stretch (polar residues) spans 674–686 (AETTVVPSSNYVP). Low complexity predominate over residues 687–697 (SSGRIGSAHSS).

Belongs to the HAK/KUP transporter (TC 2.A.72.3) family. Interacts with ILK1. In terms of processing, phosphorylated at the N-terminus (amino acids 1-95) by CIPK23. As to expression, predominantly expressed in the roots.

Its subcellular location is the cell membrane. In terms of biological role, high-affinity potassium transporter. Can also transport rubidium and cesium. Is essential with AKT1 for high-affinity potassium uptake in roots during seedling establishment and postgermination growth under low potassium conditions. Mediates potassium uptake by plant roots in response to low potassium conditions, by a calcium-, CBL-, and CIPK-dependent pathway. Positively regulated by the calcium sensors calcineurin B-like genes CBL1, CBL8, CBL9 and CBL10, and by phosphorylation by CIPK23. This is Potassium transporter 5 (POT5) from Arabidopsis thaliana (Mouse-ear cress).